A 493-amino-acid chain; its full sequence is Glutamyl-tRNA(Gln) amidotransferase subunit A (493 aa).

Active-site charge relay system residues include lysine 78 and serine 158. The active-site Acyl-ester intermediate is serine 182.

It belongs to the amidase family. GatA subfamily. As to quaternary structure, heterotrimer of A, B and C subunits.

It carries out the reaction L-glutamyl-tRNA(Gln) + L-glutamine + ATP + H2O = L-glutaminyl-tRNA(Gln) + L-glutamate + ADP + phosphate + H(+). Its function is as follows. Allows the formation of correctly charged Gln-tRNA(Gln) through the transamidation of misacylated Glu-tRNA(Gln) in organisms which lack glutaminyl-tRNA synthetase. The reaction takes place in the presence of glutamine and ATP through an activated gamma-phospho-Glu-tRNA(Gln). The polypeptide is Glutamyl-tRNA(Gln) amidotransferase subunit A (Rickettsia typhi (strain ATCC VR-144 / Wilmington)).